Reading from the N-terminus, the 339-residue chain is DNA-directed RNA polymerase subunit alpha (339 aa).

The segment at 1–235 (MTIQKNWQEL…DQLNVFVNFE (235 aa)) is alpha N-terminal domain (alpha-NTD). Positions 251 to 339 (FNPAFLKKVD…ELAKRFEDHY (89 aa)) are alpha C-terminal domain (alpha-CTD).

Belongs to the RNA polymerase alpha chain family. As to quaternary structure, homodimer. The RNAP catalytic core consists of 2 alpha, 1 beta, 1 beta' and 1 omega subunit. When a sigma factor is associated with the core the holoenzyme is formed, which can initiate transcription.

The catalysed reaction is RNA(n) + a ribonucleoside 5'-triphosphate = RNA(n+1) + diphosphate. Functionally, DNA-dependent RNA polymerase catalyzes the transcription of DNA into RNA using the four ribonucleoside triphosphates as substrates. The sequence is that of DNA-directed RNA polymerase subunit alpha from Rhodopseudomonas palustris (strain BisB18).